The sequence spans 412 residues: Adenylosuccinate synthetase (412 aa).

GTP contacts are provided by residues 12-18 (GDEGKGK) and 40-42 (GHE). The Proton acceptor role is filled by Asp-13. Asp-13 and Gly-40 together coordinate Mg(2+). Residues 13–16 (DEGK), 38–41 (NAGH), Arg-134, Asn-212, Thr-227, and Arg-291 each bind IMP. His-41 (proton donor) is an active-site residue. Substrate is bound at residue 287–293 (TSTGRRR). GTP-binding positions include Arg-293, 318 to 320 (KLD), and 400 to 402 (GTG).

Belongs to the adenylosuccinate synthetase family. Homodimer. Mg(2+) serves as cofactor.

The protein localises to the cytoplasm. The enzyme catalyses IMP + L-aspartate + GTP = N(6)-(1,2-dicarboxyethyl)-AMP + GDP + phosphate + 2 H(+). It functions in the pathway purine metabolism; AMP biosynthesis via de novo pathway; AMP from IMP: step 1/2. Functionally, plays an important role in the de novo pathway and in the salvage pathway of purine nucleotide biosynthesis. Catalyzes the first committed step in the biosynthesis of AMP from IMP. The protein is Adenylosuccinate synthetase of Fusarium vanettenii (strain ATCC MYA-4622 / CBS 123669 / FGSC 9596 / NRRL 45880 / 77-13-4) (Fusarium solani subsp. pisi).